A 177-amino-acid chain; its full sequence is von Ebner gland protein 1 (177 aa).

An N-terminal signal peptide occupies residues 1–18 (MKALLLTFGLSLLAALQA). A disulfide bond links Cys80 and Cys172.

It belongs to the calycin superfamily. Lipocalin family. Homodimer.

Its subcellular location is the secreted. In terms of biological role, could play a role in taste reception. Could be necessary for the concentration and delivery of sapid molecules in the gustatory system. The sequence is that of von Ebner gland protein 1 (Vegp1) from Rattus norvegicus (Rat).